The primary structure comprises 384 residues: S-adenosylmethionine synthase (384 aa).

Histidine 15 contributes to the ATP binding site. Aspartate 17 contacts Mg(2+). K(+) is bound at residue glutamate 43. The L-methionine site is built by glutamate 56 and glutamine 99. Residues 99–109 are flexible loop; the sequence is QSPDINQGVDR. ATP-binding positions include 164-166, 230-231, aspartate 239, 245-246, alanine 262, and lysine 266; these read DAK, RF, and RK. Residue aspartate 239 coordinates L-methionine. Lysine 270 is a binding site for L-methionine.

Belongs to the AdoMet synthase family. As to quaternary structure, homotetramer; dimer of dimers. It depends on Mg(2+) as a cofactor. K(+) serves as cofactor.

The protein resides in the cytoplasm. It catalyses the reaction L-methionine + ATP + H2O = S-adenosyl-L-methionine + phosphate + diphosphate. The protein operates within amino-acid biosynthesis; S-adenosyl-L-methionine biosynthesis; S-adenosyl-L-methionine from L-methionine: step 1/1. Functionally, catalyzes the formation of S-adenosylmethionine (AdoMet) from methionine and ATP. The overall synthetic reaction is composed of two sequential steps, AdoMet formation and the subsequent tripolyphosphate hydrolysis which occurs prior to release of AdoMet from the enzyme. The sequence is that of S-adenosylmethionine synthase from Salmonella heidelberg (strain SL476).